We begin with the raw amino-acid sequence, 1934 residues long: Pyruvate dehydrogenase [NADP(+)] (1934 aa).

4Fe-4S ferredoxin-type domains follow at residues 710–739 (SIPI…PFLL) and 767–796 (YRIQ…MEGL). Residues Cys719, Cys722, Cys725, Cys729, Cys776, Cys779, Cys782, and Cys786 each contribute to the [4Fe-4S] cluster site. Residues 1288–1438 (MHVLYGTETG…ELIEWLPDYL (151 aa)) form the Flavodoxin-like domain. An FAD-binding FR-type domain is found at 1501–1759 (PNSVLLPVIE…NIKASAFNLP (259 aa)). Residues 1542 to 1553 (YCLGDSLALYGQ) and 1685 to 1695 (IKSRSYSIASC) each bind FAD.

This sequence in the N-terminal section; belongs to the pyruvate:ferredoxin/flavodoxin oxidoreductase family. In terms of assembly, homodimer. The cofactor is FAD. It depends on FMN as a cofactor. Thiamine diphosphate serves as cofactor.

It catalyses the reaction pyruvate + NADP(+) + CoA = acetyl-CoA + CO2 + NADPH. In terms of biological role, may have an important role in respiratory metabolism. Cryptosporidium have a relic mitochondrion with no function in energy metabolism so it is not known if PFOR has a function. The protein is Pyruvate dehydrogenase [NADP(+)] (PFOR) of Cryptosporidium parvum.